The chain runs to 154 residues: Aspartate carbamoyltransferase regulatory chain (154 aa).

Zn(2+) is bound by residues Cys-109, Cys-114, Cys-138, and Cys-141.

This sequence belongs to the PyrI family. As to quaternary structure, contains catalytic and regulatory chains. The cofactor is Zn(2+).

Functionally, involved in allosteric regulation of aspartate carbamoyltransferase. The protein is Aspartate carbamoyltransferase regulatory chain of Yersinia pestis.